The following is a 216-amino-acid chain: NADH-quinone oxidoreductase subunit C (216 aa).

This sequence belongs to the complex I 30 kDa subunit family. NDH-1 is composed of 14 different subunits. Subunits NuoB, C, D, E, F, and G constitute the peripheral sector of the complex.

The protein localises to the cell inner membrane. The enzyme catalyses a quinone + NADH + 5 H(+)(in) = a quinol + NAD(+) + 4 H(+)(out). Its function is as follows. NDH-1 shuttles electrons from NADH, via FMN and iron-sulfur (Fe-S) centers, to quinones in the respiratory chain. The immediate electron acceptor for the enzyme in this species is believed to be ubiquinone. Couples the redox reaction to proton translocation (for every two electrons transferred, four hydrogen ions are translocated across the cytoplasmic membrane), and thus conserves the redox energy in a proton gradient. The polypeptide is NADH-quinone oxidoreductase subunit C (Francisella tularensis subsp. holarctica (strain FTNF002-00 / FTA)).